Consider the following 37-residue polypeptide: Esculentin-2SE (37 aa).

Residues Cys-31 and Cys-37 are joined by a disulfide bond.

In terms of tissue distribution, expressed by the skin glands.

It localises to the secreted. Functionally, mast cell degranulating peptide. Causes histamine release from rat peritoneal mast cells in vitro. Has antibacterial activity against the Gram-negative bacterium E.coli K12 and Gram-positive bacterium M.luteus NCT C2665. In Lithobates sevosus (Dusky gopher frog), this protein is Esculentin-2SE.